A 685-amino-acid polypeptide reads, in one-letter code: uncharacterized protein (685 aa).

Disordered stretches follow at residues 78–220 (AKQA…HIFD), 251–280 (TQNPVPPPPAPPLTNNQGENNIPTDNRNNE), 296–332 (DNNNNNNNNNNNLGSAMNTPMNNMNKGGPRNNVNNSE), and 459–657 (RNVK…NNKS). Residues 86–139 (KKKETENVEEEGEEKEKKIDDESFPDLLESTEKMKSELSKEKDKKKKQLKDGKK) adopt a coiled-coil conformation. 2 stretches are compositionally biased toward basic and acidic residues: residues 115–127 (STEKMKSELSKEK) and 165–181 (FNDKKKYNMYDGNKKND). Over residues 190–215 (NNQQNDMNNNNQNNQNNMNNNNNNNN) the composition is skewed to low complexity. Residues 263–276 (LTNNQGENNIPTDN) are compositionally biased toward polar residues. Positions 297–307 (NNNNNNNNNNN) are enriched in low complexity. Residues 308–331 (LGSAMNTPMNNMNKGGPRNNVNNS) show a composition bias toward polar residues. Composition is skewed to low complexity over residues 460–474 (NVKNLGQNNNEGNTN) and 481–498 (NNRGQGNNNNNNNNNNFN). Over residues 499-515 (RRNDKNDNRNFRRKDID) the composition is skewed to basic and acidic residues. A compositionally biased stretch (polar residues) spans 520 to 530 (WRNTANPTQEE). A compositionally biased stretch (low complexity) spans 531-590 (NNNNMNHNNNYNNNNNNNNNNNNNNNNNNNTNHGKNFRNFNNLNNMKNNNSSNNKMMGMN). Residues 591–602 (HMQQKGMNSSTG) show a composition bias toward polar residues. The segment covering 617–656 (NNKMYKNNMGNANNNNNNNAVNTNFNNNNNNGNFHMNNNK) has biased composition (low complexity).

This is an uncharacterized protein from Plasmodium falciparum (isolate 3D7).